A 95-amino-acid polypeptide reads, in one-letter code: Large ribosomal subunit protein uL23 (95 aa).

The protein belongs to the universal ribosomal protein uL23 family. As to quaternary structure, part of the 50S ribosomal subunit. Contacts protein L29, and trigger factor when it is bound to the ribosome.

In terms of biological role, one of the early assembly proteins it binds 23S rRNA. One of the proteins that surrounds the polypeptide exit tunnel on the outside of the ribosome. Forms the main docking site for trigger factor binding to the ribosome. The sequence is that of Large ribosomal subunit protein uL23 from Leuconostoc mesenteroides subsp. mesenteroides (strain ATCC 8293 / DSM 20343 / BCRC 11652 / CCM 1803 / JCM 6124 / NCDO 523 / NBRC 100496 / NCIMB 8023 / NCTC 12954 / NRRL B-1118 / 37Y).